The sequence spans 194 residues: Pyridoxal 5'-phosphate synthase subunit PdxT (194 aa).

50–52 is an L-glutamine binding site; that stretch reads GES. C82 (nucleophile) is an active-site residue. L-glutamine contacts are provided by residues R109 and 136–137; that span reads IR. Catalysis depends on charge relay system residues H172 and E174.

The protein belongs to the glutaminase PdxT/SNO family. In the presence of PdxS, forms a dodecamer of heterodimers. Only shows activity in the heterodimer.

It carries out the reaction aldehydo-D-ribose 5-phosphate + D-glyceraldehyde 3-phosphate + L-glutamine = pyridoxal 5'-phosphate + L-glutamate + phosphate + 3 H2O + H(+). The enzyme catalyses L-glutamine + H2O = L-glutamate + NH4(+). It participates in cofactor biosynthesis; pyridoxal 5'-phosphate biosynthesis. In terms of biological role, catalyzes the hydrolysis of glutamine to glutamate and ammonia as part of the biosynthesis of pyridoxal 5'-phosphate. The resulting ammonia molecule is channeled to the active site of PdxS. The polypeptide is Pyridoxal 5'-phosphate synthase subunit PdxT (Streptococcus pneumoniae (strain CGSP14)).